A 176-amino-acid polypeptide reads, in one-letter code: Mediator of RNA polymerase II transcription subunit 11 (176 aa).

The interval Ser98–Asn176 is disordered. Basic and acidic residues predominate over residues Arg99–Ala108. The segment covering His124 to Gln154 has biased composition (low complexity).

The protein belongs to the Mediator complex subunit 11 family. In terms of assembly, component of the Mediator complex, which may include CDK8, MED4, MED6, MED11, MED14, MED17, MED18, MED20, MED21, MED22, MED27, MED28, MED30 and MED31.

The protein localises to the nucleus. In terms of biological role, component of the Mediator complex, a coactivator involved in the regulated transcription of nearly all RNA polymerase II-dependent genes. Mediator functions as a bridge to convey information from gene-specific regulatory proteins to the basal RNA polymerase II transcription machinery. Mediator is recruited to promoters by direct interactions with regulatory proteins and serves as a scaffold for the assembly of a functional pre-initiation complex with RNA polymerase II and the general transcription factors. In Drosophila melanogaster (Fruit fly), this protein is Mediator of RNA polymerase II transcription subunit 11 (MED11).